Here is a 433-residue protein sequence, read N- to C-terminus: MAPARQELQHESRCRPSRTVDAWRAAVATRGRHMETPGYRRRTRCGGWGLPRSVSSLAAVGLLCTALTTFICWGQLPPLPWASPAPQRLVGVLLWWEPFRGRGGYPKSPPDCSLRFNISGCRLLTDRAAYGEAQAVLFHHRDLVKELHDWPPPWGARERTDKALVLRVFDDQEGAVTLTGKALETVGSRPPGQRWVWMNFESPSHTPGLRGLAKDLFNWTLSYRTDSDVFVPYGFLYSRSDPTEQPSGLGPQLARKRGLVAWVVSNWNEHQARVRYYHQLSRHVSVDVFGRTGPGRPVPAIGLLHTVARYKFYLAFENSRHVDYITEKLWRNAFLAGAVPVVLGPDRANYERFVPRGAFIHVDDFPNAASLAAYLLFLDRNVAVYRRYFRWRRSFAVHITSFWDEQWCRTCQAVQTSGDQPKSIHNLADWFQR.

The Cytoplasmic portion of the chain corresponds to 1-52 (MAPARQELQHESRCRPSRTVDAWRAAVATRGRHMETPGYRRRTRCGGWGLPR). A helical; Signal-anchor for type II membrane protein transmembrane segment spans residues 53-74 (SVSSLAAVGLLCTALTTFICWG). Residues 75-433 (QLPPLPWASP…IHNLADWFQR (359 aa)) lie on the Lumenal side of the membrane. N-linked (GlcNAc...) asparagine glycans are attached at residues asparagine 117 and asparagine 218.

This sequence belongs to the glycosyltransferase 10 family. As to expression, highest expression in stomach and colon. It is also expressed in the lung, testis, uterus, small intestine and to a lesser extent in spleen, and ovary. Present in trace amounts in brain, thymus, heart, smooth muscle, kidney and bone marrow. Not found in liver, salivary gland and pancreas.

It is found in the golgi apparatus. The protein localises to the golgi stack membrane. It carries out the reaction a beta-D-galactosyl-(1-&gt;4)-N-acetyl-beta-D-glucosaminyl derivative + GDP-beta-L-fucose = a beta-D-galactosyl-(1-&gt;4)-[alpha-L-fucosyl-(1-&gt;3)]-N-acetyl-beta-D-glucosaminyl derivative + GDP + H(+). The enzyme catalyses an N-acetyl-alpha-neuraminyl-(2-&gt;3)-beta-D-galactosyl-(1-&gt;4)-N-acetyl-beta-D-glucosaminyl derivative + GDP-beta-L-fucose = an alpha-Neu5Ac-(2-&gt;3)-beta-D-Gal-(1-&gt;4)-[alpha-L-Fuc-(1-&gt;3)]-beta-D-GlcNAc derivative + GDP + H(+). It catalyses the reaction an alpha-Neu5Ac-(2-&gt;3)-beta-D-Gal-(1-&gt;4)-beta-D-GlcNAc-(1-&gt;3)-beta-D-Gal-(1-&gt;4)-beta-D-GlcNAc derivative + GDP-beta-L-fucose = an alpha-Neu5Ac-(2-&gt;3)-beta-D-Gal-(1-&gt;4)-beta-D-GlcNAc-(1-&gt;3)-beta-D-Gal-(1-&gt;4)-[alpha-L-Fuc-(1-&gt;3)]-beta-D-GlcNAc derivative + GDP + H(+). The catalysed reaction is an alpha-Neu5Ac-(2-&gt;3)-beta-D-Gal-(1-&gt;4)-beta-D-GlcNAc6S derivative + GDP-beta-L-fucose = an alpha-Neu5Ac-(2-&gt;3)-beta-D-Gal-(1-&gt;4)-[alpha-L-Fuc-(1-&gt;3)]-beta-D-GlcNAc6S derivative + GDP + H(+). The protein operates within protein modification; protein glycosylation. In terms of biological role, catalyzes alpha(1-&gt;3) linkage of fucosyl moiety transferred from GDP-beta-L-fucose to N-acetyl glucosamine (GlcNAc) within type 2 lactosamine (LacNAc, Gal-beta(1-&gt;4)GlcNAc) glycan attached to N- or O-linked glycoproteins. Robustly fucosylates nonsialylated distal LacNAc unit of the polylactosamine chain to form Lewis X antigen (CD15), a glycan determinant known to mediate important cellular functions in development and immunity. Fucosylates with lower efficiency sialylated LacNAc acceptors to form sialyl Lewis X and 6-sulfo sialyl Lewis X determinants that serve as recognition epitopes for C-type lectins. Together with FUT7 contributes to SELE, SELL and SELP selectin ligand biosynthesis and selectin-dependent lymphocyte homing, leukocyte migration and blood leukocyte homeostasis. In a cell type specific manner, may also fucosylate the internal LacNAc unit of the polylactosamine chain to form VIM-2 antigen that serves as recognition epitope for SELE. In Mus musculus (Mouse), this protein is Alpha-(1,3)-fucosyltransferase 4 (Fut4).